The chain runs to 234 residues: Ribose-5-phosphate isomerase A (234 aa).

Substrate is bound by residues 34 to 37, 90 to 93, and 103 to 106; these read TGST, DGAD, and KGGG. Catalysis depends on E112, which acts as the Proton acceptor. K130 contacts substrate.

The protein belongs to the ribose 5-phosphate isomerase family. As to quaternary structure, homodimer.

The enzyme catalyses aldehydo-D-ribose 5-phosphate = D-ribulose 5-phosphate. The protein operates within carbohydrate degradation; pentose phosphate pathway; D-ribose 5-phosphate from D-ribulose 5-phosphate (non-oxidative stage): step 1/1. Its function is as follows. Catalyzes the reversible conversion of ribose-5-phosphate to ribulose 5-phosphate. The sequence is that of Ribose-5-phosphate isomerase A from Methanosarcina acetivorans (strain ATCC 35395 / DSM 2834 / JCM 12185 / C2A).